The following is a 67-amino-acid chain: Bowman-Birk type proteinase inhibitor A6 (67 aa).

6 disulfide bridges follow: Cys9/Cys66, Cys10/Cys29, Cys13/Cys62, Cys16/Cys27, Cys36/Cys43, and Cys40/Cys54.

Belongs to the Bowman-Birk serine protease inhibitor family. In terms of tissue distribution, expressed in bulb (at protein level).

Serine protease inhibitor. Strongly inhibits trypsin (Ki = 4 nM) and elastase (Ki = 4.8 nM). Also inhibits chymotrypsin with a Ki of 22 nM. Does not inhibit bacterial subtilisin. The sequence is that of Bowman-Birk type proteinase inhibitor A6 from Hyacinthus orientalis (Common hyacinth).